A 507-amino-acid polypeptide reads, in one-letter code: Eukaryotic translation initiation factor 4E-binding protein Mextli homolog (507 aa).

Residues 126-163 (RPEGQHDPAPTVGIPPSATSPPTQVTSSVTSPVPSSPQ) are disordered. A compositionally biased stretch (low complexity) spans 140-158 (PPSATSPPTQVTSSVTSPV). In terms of domain architecture, KH spans 242 to 307 (QLRHEMIIRN…EDIERAKDMI (66 aa)). Disordered regions lie at residues 314-360 (NMSP…DEDI) and 395-424 (ARPS…QQEP). Residues 329-348 (QYSGMSSENQSIPSQQNTAN) show a composition bias toward polar residues. The span at 349-360 (IDEDDDDDDEDI) shows a compositional bias: acidic residues.

In terms of assembly, interacts with eukaryotic translation initiation factor ife-3.

It localises to the cytoplasm. Plays a role in promoting translation. This is Eukaryotic translation initiation factor 4E-binding protein Mextli homolog from Caenorhabditis elegans.